The sequence spans 1242 residues: ATP-dependent helicase/nuclease subunit A (1242 aa).

In terms of domain architecture, UvrD-like helicase ATP-binding spans 12–487 (SRWTDEQWKA…IDLASNFRSR (476 aa)). 33-40 (AAAGSGKT) is an ATP binding site. Residues 514–808 (AAQLKYGADY…RIMTIHSSKG (295 aa)) enclose the UvrD-like helicase C-terminal domain.

This sequence belongs to the helicase family. AddA subfamily. As to quaternary structure, heterodimer of AddA and AddB/RexB. Mg(2+) serves as cofactor.

It catalyses the reaction Couples ATP hydrolysis with the unwinding of duplex DNA by translocating in the 3'-5' direction.. The enzyme catalyses ATP + H2O = ADP + phosphate + H(+). Functionally, the heterodimer acts as both an ATP-dependent DNA helicase and an ATP-dependent, dual-direction single-stranded exonuclease. Recognizes the chi site generating a DNA molecule suitable for the initiation of homologous recombination. The AddA nuclease domain is required for chi fragment generation; this subunit has the helicase and 3' -&gt; 5' nuclease activities. In Geobacillus kaustophilus (strain HTA426), this protein is ATP-dependent helicase/nuclease subunit A.